The chain runs to 227 residues: Ribosomal RNA large subunit methyltransferase E (227 aa).

Residues Gly78, Trp80, Asp103, Asp119, and Asp143 each contribute to the S-adenosyl-L-methionine site. Lys183 (proton acceptor) is an active-site residue.

It belongs to the class I-like SAM-binding methyltransferase superfamily. RNA methyltransferase RlmE family.

The protein resides in the cytoplasm. The enzyme catalyses uridine(2552) in 23S rRNA + S-adenosyl-L-methionine = 2'-O-methyluridine(2552) in 23S rRNA + S-adenosyl-L-homocysteine + H(+). Its function is as follows. Specifically methylates the uridine in position 2552 of 23S rRNA at the 2'-O position of the ribose in the fully assembled 50S ribosomal subunit. The chain is Ribosomal RNA large subunit methyltransferase E from Rickettsia felis (strain ATCC VR-1525 / URRWXCal2) (Rickettsia azadi).